Here is a 504-residue protein sequence, read N- to C-terminus: uncharacterized protein (504 aa).

A disordered region spans residues threonine 36–aspartate 60. The Integrase catalytic domain occupies glutamine 125–arginine 309.

This is an uncharacterized protein from Sinorhizobium fredii (strain NBRC 101917 / NGR234).